Consider the following 308-residue polypeptide: Aspartate carbamoyltransferase catalytic subunit (308 aa).

The carbamoyl phosphate site is built by arginine 55 and threonine 56. Position 83 (lysine 83) interacts with L-aspartate. 3 residues coordinate carbamoyl phosphate: arginine 105, histidine 133, and glutamine 136. Arginine 166 and arginine 223 together coordinate L-aspartate. 2 residues coordinate carbamoyl phosphate: glycine 264 and proline 265.

This sequence belongs to the aspartate/ornithine carbamoyltransferase superfamily. ATCase family. In terms of assembly, heterododecamer (2C3:3R2) of six catalytic PyrB chains organized as two trimers (C3), and six regulatory PyrI chains organized as three dimers (R2).

The enzyme catalyses carbamoyl phosphate + L-aspartate = N-carbamoyl-L-aspartate + phosphate + H(+). Its pathway is pyrimidine metabolism; UMP biosynthesis via de novo pathway; (S)-dihydroorotate from bicarbonate: step 2/3. Functionally, catalyzes the condensation of carbamoyl phosphate and aspartate to form carbamoyl aspartate and inorganic phosphate, the committed step in the de novo pyrimidine nucleotide biosynthesis pathway. The sequence is that of Aspartate carbamoyltransferase catalytic subunit from Salinispora tropica (strain ATCC BAA-916 / DSM 44818 / JCM 13857 / NBRC 105044 / CNB-440).